Here is a 126-residue protein sequence, read N- to C-terminus: Aspartate 1-decarboxylase (126 aa).

The active-site Schiff-base intermediate with substrate; via pyruvic acid is Ser25. The residue at position 25 (Ser25) is a Pyruvic acid (Ser). Residue Thr57 participates in substrate binding. The active-site Proton donor is Tyr58. 73–75 (GGA) is a binding site for substrate.

This sequence belongs to the PanD family. As to quaternary structure, heterooctamer of four alpha and four beta subunits. Pyruvate serves as cofactor. Post-translationally, is synthesized initially as an inactive proenzyme, which is activated by self-cleavage at a specific serine bond to produce a beta-subunit with a hydroxyl group at its C-terminus and an alpha-subunit with a pyruvoyl group at its N-terminus.

It is found in the cytoplasm. The catalysed reaction is L-aspartate + H(+) = beta-alanine + CO2. The protein operates within cofactor biosynthesis; (R)-pantothenate biosynthesis; beta-alanine from L-aspartate: step 1/1. Functionally, catalyzes the pyruvoyl-dependent decarboxylation of aspartate to produce beta-alanine. The sequence is that of Aspartate 1-decarboxylase from Xylella fastidiosa (strain Temecula1 / ATCC 700964).